The sequence spans 294 residues: Lipoprotein NlpI (294 aa).

An N-terminal signal peptide occupies residues 1–18 (MKPFLRWCFVATALTLAG). Cys-19 is lipidated: N-palmitoyl cysteine. Cys-19 carries the S-diacylglycerol cysteine lipid modification. 3 TPR repeats span residues 62-95 (AQLL…RPDM), 96-129 (PEVF…DPTY), and 234-267 (SETN…NVHN).

As to quaternary structure, homodimer.

The protein localises to the cell membrane. In terms of biological role, may be involved in cell division. May play a role in bacterial septation or regulation of cell wall degradation during cell division. This chain is Lipoprotein NlpI (nlpI), found in Shigella boydii serotype 4 (strain Sb227).